Here is a 217-residue protein sequence, read N- to C-terminus: MALVIKLSGRVFEDEELVFKYAGVIRNLSGKVAVVTGGGEVARRYIAIAKRGGASNTFQDLLGIYASRLNALLLISLLKDAYPRVPANIEEFLEAWSGHRIVVTGGFQPGQSTATVAALVAEAVGASALLNAANIDAVYSDDPRRNPNAQRLRELKYDEFEKIIRSSSLPGGYELMDVWSISILKRNCITTYVFDGRRPDHVVAAARGENPGSKITC.

Position 6 to 10 (6 to 10 (KLSGR)) interacts with ATP. Glycine 38 serves as a coordination point for UMP. Residues glycine 39 and arginine 43 each contribute to the ATP site. UMP contacts are provided by residues aspartate 60 and 107-113 (FQPGQST). ATP contacts are provided by asparagine 134, tyrosine 139, and aspartate 142.

This sequence belongs to the UMP kinase family. Homohexamer.

The protein localises to the cytoplasm. The enzyme catalyses UMP + ATP = UDP + ADP. Its pathway is pyrimidine metabolism; CTP biosynthesis via de novo pathway; UDP from UMP (UMPK route): step 1/1. Inhibited by UTP. Functionally, catalyzes the reversible phosphorylation of UMP to UDP. The polypeptide is Uridylate kinase (Pyrobaculum aerophilum (strain ATCC 51768 / DSM 7523 / JCM 9630 / CIP 104966 / NBRC 100827 / IM2)).